Reading from the N-terminus, the 449-residue chain is Adenylosuccinate synthetase (449 aa).

Residues 12 to 18 (GDEGKGK) and 40 to 42 (GHT) contribute to the GTP site. Residue Asp13 is the Proton acceptor of the active site. Residues Asp13 and Gly40 each contribute to the Mg(2+) site. IMP is bound by residues 13–16 (DEGK), 38–41 (NAGH), Thr128, Arg142, Gln223, Thr238, and Arg302. His41 functions as the Proton donor in the catalytic mechanism. Substrate is bound at residue 298–304 (TTTGRQR). GTP is bound by residues Arg304, 330 to 332 (KLD), and 412 to 414 (SLG).

Belongs to the adenylosuccinate synthetase family. As to quaternary structure, homodimer. The cofactor is Mg(2+).

Its subcellular location is the cytoplasm. It carries out the reaction IMP + L-aspartate + GTP = N(6)-(1,2-dicarboxyethyl)-AMP + GDP + phosphate + 2 H(+). It functions in the pathway purine metabolism; AMP biosynthesis via de novo pathway; AMP from IMP: step 1/2. In terms of biological role, plays an important role in the de novo pathway of purine nucleotide biosynthesis. Catalyzes the first committed step in the biosynthesis of AMP from IMP. This chain is Adenylosuccinate synthetase, found in Synechococcus sp. (strain JA-2-3B'a(2-13)) (Cyanobacteria bacterium Yellowstone B-Prime).